Consider the following 201-residue polypeptide: Inosine triphosphate pyrophosphatase (201 aa).

13–18 lines the ITP pocket; sequence TGNAKK. Mg(2+) is bound at residue E43. ITP-binding positions include K55, 71–72, K88, 148–151, K171, and 176–177; these read DT, FGWD, and HR.

The protein belongs to the HAM1 NTPase family. In terms of assembly, homodimer. It depends on Mg(2+) as a cofactor. Mn(2+) is required as a cofactor.

It is found in the cytoplasm. The catalysed reaction is ITP + H2O = IMP + diphosphate + H(+). It catalyses the reaction dITP + H2O = dIMP + diphosphate + H(+). The enzyme catalyses XTP + H2O = XMP + diphosphate + H(+). It carries out the reaction N(6)-hydroxy-dATP + H2O = N(6)-hydroxy-dAMP + diphosphate + H(+). Functionally, pyrophosphatase that hydrolyzes the non-canonical purine nucleotides inosine triphosphate (ITP), deoxyinosine triphosphate (dITP) as well as 2'-deoxy-N-6-hydroxylaminopurine triphosphate (dHAPTP) and xanthosine 5'-triphosphate (XTP) to their respective monophosphate derivatives. The enzyme does not distinguish between the deoxy- and ribose forms. Probably excludes non-canonical purines from RNA and DNA precursor pools, thus preventing their incorporation into RNA and DNA and avoiding chromosomal lesions. This chain is Inosine triphosphate pyrophosphatase, found in Gallus gallus (Chicken).